We begin with the raw amino-acid sequence, 365 residues long: Phosphate acyltransferase (365 aa).

It belongs to the PlsX family. As to quaternary structure, homodimer. Probably interacts with PlsY.

It localises to the cytoplasm. It catalyses the reaction a fatty acyl-[ACP] + phosphate = an acyl phosphate + holo-[ACP]. It functions in the pathway lipid metabolism; phospholipid metabolism. In terms of biological role, catalyzes the reversible formation of acyl-phosphate (acyl-PO(4)) from acyl-[acyl-carrier-protein] (acyl-ACP). This enzyme utilizes acyl-ACP as fatty acyl donor, but not acyl-CoA. The chain is Phosphate acyltransferase from Picosynechococcus sp. (strain ATCC 27264 / PCC 7002 / PR-6) (Agmenellum quadruplicatum).